A 248-amino-acid chain; its full sequence is Protein GrpE (248 aa).

The segment at 229 to 248 (AAPKEDTLPAQENQSSPADS) is disordered. Residues 238–248 (AQENQSSPADS) are compositionally biased toward polar residues.

The protein belongs to the GrpE family. Homodimer.

Its subcellular location is the cytoplasm. Participates actively in the response to hyperosmotic and heat shock by preventing the aggregation of stress-denatured proteins, in association with DnaK and GrpE. It is the nucleotide exchange factor for DnaK and may function as a thermosensor. Unfolded proteins bind initially to DnaJ; upon interaction with the DnaJ-bound protein, DnaK hydrolyzes its bound ATP, resulting in the formation of a stable complex. GrpE releases ADP from DnaK; ATP binding to DnaK triggers the release of the substrate protein, thus completing the reaction cycle. Several rounds of ATP-dependent interactions between DnaJ, DnaK and GrpE are required for fully efficient folding. The polypeptide is Protein GrpE (Nostoc sp. (strain PCC 7120 / SAG 25.82 / UTEX 2576)).